The following is a 213-amino-acid chain: Retinitis pigmentosa 9 protein homolog (213 aa).

A disordered region spans residues 1-61; the sequence is MSSGAGSRRP…IKEDETKPED (61 aa). The segment at 1 to 147 is PIM1-binding; that stretch reads MSSGAGSRRP…RENKRHEKDV (147 aa). 2 stretches are compositionally biased toward basic and acidic residues: residues 9 to 21 and 52 to 61; these read RPREPPEHELQRR and IKEDETKPED. A CCHC-type zinc finger spans residues 96-114; the sequence is QCWRCKRYGHRTGDKECPF. A Glycyl lysine isopeptide (Lys-Gly) (interchain with G-Cter in SUMO2) cross-link involves residue lysine 121. The tract at residues 154–213 is disordered; that stretch reads QLLEDSTSDDDGSSSSSSGDREKRKKRKKKEKHKKRKKEKKKKKKRKHKASKSSESSDSE. Positions 176 to 204 are enriched in basic residues; that stretch reads KRKKRKKKEKHKKRKKEKKKKKKRKHKAS. Residues serine 204 and serine 206 each carry the phosphoserine; by PIM1; in vitro modification.

As to quaternary structure, binds to PIM1. Binds to ZNHIT4. Highly expressed in the testis, moderately in the kidney, liver and spleen, and weakly in the skeletal muscle and heart.

The protein localises to the nucleus. Is thought to be a target protein for the PIM1 kinase. May play some roles in B-cell proliferation in association with PIM1. The polypeptide is Retinitis pigmentosa 9 protein homolog (rp9) (Mus musculus (Mouse)).